The primary structure comprises 462 residues: MASNSSSCPTPGGGHLNGYPVPPYAFFFPPMLGGLSPPGALTTLQHQLPVSGYSTPSPATIETQSSSSEEIVPSPPSPPPLPRIYKPCFVCQDKSSGYHYGVSACEGCKGFFRRSIQKNMVYTCHRDKNCIINKVTRNRCQYCRLQKCFEVGMSKESVRNDRNKKKKEVPKPECSESYTLTPEVGELIEKVRKAHQETFPALCQLGKYTTNNSSEQRVSLDIDLWDKFSELSTKCIIKTVEFAKQLPGFTTLTIADQITLLKAACLDILILRICTRYTPEQDTMTFSDGLTLNRTQMHNAGFGPLTDLVFAFANQLLPLEMDDAETGLLSAICLICGDRQDLEQPDRVDMLQEPLLEALKVYVRKRRPSRPHMFPKMLMKITDLRSISAKGAERVITLKMEIPGSMPPLIQEMLENSEGLDTLSGQPGGGGRDGGGLAPPPGSCSPSLSPSSNRSSPATHSP.

Residues 1–87 form a modulating region; that stretch reads MASNSSSCPT…PPPLPRIYKP (87 aa). Polar residues predominate over residues 52-64; it reads GYSTPSPATIETQ. A disordered region spans residues 52–77; it reads GYSTPSPATIETQSSSSEEIVPSPPS. A Phosphoserine; by CDK7 modification is found at Ser-77. 2 consecutive NR C4-type zinc fingers follow at residues 88 to 108 and 124 to 148; these read CFVCQDKSSGYHYGVSACEGC and CHRDKNCIINKVTRNRCQYCRLQKC. A DNA-binding region (nuclear receptor) is located at residues 88–153; sequence CFVCQDKSSG…RLQKCFEVGM (66 aa). Ser-96 is subject to Phosphoserine; by PKB/AKT1. The hinge stretch occupies residues 154-182; it reads SKESVRNDRNKKKKEVPKPECSESYTLTP. Glycyl lysine isopeptide (Lys-Gly) (interchain with G-Cter in SUMO) cross-links involve residues Lys-166 and Lys-171. One can recognise an NR LBD domain in the interval 183–417; sequence EVGELIEKVR…PLIQEMLENS (235 aa). Ser-219 is modified (phosphoserine; by PKA). Cys-235 serves as a coordination point for all-trans-retinoate. Residues 254-258 carry the UBR5-degron motif; that stretch reads IADQI. Position 287 (Ser-287) interacts with all-trans-retinoate. Ser-369 bears the Phosphoserine; by PKA mark. Lys-399 participates in a covalent cross-link: Glycyl lysine isopeptide (Lys-Gly) (interchain with G-Cter in SUMO). The interval 404–419 is required for binding corepressor NCOR1; sequence GSMPPLIQEMLENSEG. The 9aaTAD signature appears at 408 to 416; sequence PLIQEMLEN. Residues 419–462 form a disordered region; it reads GLDTLSGQPGGGGRDGGGLAPPPGSCSPSLSPSSNRSSPATHSP. Residues 426–437 show a composition bias toward gly residues; that stretch reads QPGGGGRDGGGL. The segment covering 444–462 has biased composition (low complexity); it reads CSPSLSPSSNRSSPATHSP.

This sequence belongs to the nuclear hormone receptor family. NR1 subfamily. As to quaternary structure, heterodimer; with RXRA (via C-terminus); association with RXRA is enhanced by pulsatile shear stress. Binds DNA preferentially as a heterodimer. RXRA serves as enhancer to induce RARA binding to RARE. Interacts with RXRG. Interacts with coactivators NCOA3 and NCOA6. Interacts with NCOA7; the interaction requires ligand-binding. Interacts (via the ligand-binding domain) with PRAME; the interaction is ligand (retinoic acid)-dependent. Interacts with AKT1; the interaction phosphorylates RARA and represses transactivation. Interacts with PRKAR1A; the interaction negatively regulates RARA transcriptional activity. Interacts with NCOR1 and NCOR2. Interacts with PRMT2. Interacts with LRIF1. Interacts with ASXL1 and NCOA1. Interacts with ACTN4. In a complex with HDAC3, HDAC5 and HDAC7; the HDACs serve as corepressors of RARA, causing its deacetylation and inhibition of RARE DNA element binding; association with HDAC3, HDAC5 and HDAC7 is increased upon oscillatory shear stress. Interacts with CDK7. In the absence of hormonal ligand, interacts with TACC1. Phosphorylated on serine and threonine residues. Phosphorylation does not change during cell cycle. Phosphorylation on Ser-77 is crucial for transcriptional activity. Phosphorylation by AKT1 is required for the repressor activity but has no effect on DNA binding, protein stability nor subcellular localization. Phosphorylated by PKA in vitro. This phosphorylation on Ser-219 and Ser-369 is critical for ligand binding, nuclear localization and transcriptional activity in response to FSH signaling. Post-translationally, sumoylated with SUMO2, mainly on Lys-399 which is also required for SENP6 binding. On all-trans retinoic acid (ATRA) binding, a conformational change may occur that allows sumoylation on two additional site, Lys-166 and Lys-171. Probably desumoylated by SENP6. Sumoylation levels determine nuclear localization and regulate ATRA-mediated transcriptional activity. In terms of processing, trimethylation enhances heterodimerization with RXRA and positively modulates the transcriptional activation. Ubiquitinated by UBR5, leading to its degradation: UBR5 specifically recognizes and binds ligand-bound RARA when it is not associated with coactivators (NCOAs). In presence of NCOAs, the UBR5-degron is not accessible, preventing its ubiquitination and degradation. Post-translationally, acetylated; acetylation is increased upon pulsatile shear stress and decreased upon oscillatory shear stress. As to expression, expressed in monocytes.

The protein resides in the nucleus. The protein localises to the cytoplasm. Receptor for retinoic acid. Retinoic acid receptors bind as heterodimers to their target response elements in response to their ligands, all-trans or 9-cis retinoic acid, and regulate gene expression in various biological processes. The RXR/RAR heterodimers bind to the retinoic acid response elements (RARE) composed of tandem 5'-AGGTCA-3' sites known as DR1-DR5. In the absence of ligand, the RXR-RAR heterodimers associate with a multiprotein complex containing transcription corepressors that induce histone deacetylation, chromatin condensation and transcriptional suppression. On ligand binding, the corepressors dissociate from the receptors and associate with the coactivators leading to transcriptional activation. Formation of a complex with histone deacetylases might lead to inhibition of RARE DNA element binding and to transcriptional repression. Transcriptional activation and RARE DNA element binding might be supported by the transcription factor KLF2. RARA plays an essential role in the regulation of retinoic acid-induced germ cell development during spermatogenesis. Has a role in the survival of early spermatocytes at the beginning prophase of meiosis. In Sertoli cells, may promote the survival and development of early meiotic prophase spermatocytes. In concert with RARG, required for skeletal growth, matrix homeostasis and growth plate function. Together with RXRA, positively regulates microRNA-10a expression, thereby inhibiting the GATA6/VCAM1 signaling response to pulsatile shear stress in vascular endothelial cells. In association with HDAC3, HDAC5 and HDAC7 corepressors, plays a role in the repression of microRNA-10a and thereby promotes the inflammatory response. The protein is Retinoic acid receptor alpha (RARA) of Homo sapiens (Human).